A 294-amino-acid chain; its full sequence is Acetyl-coenzyme A carboxylase carboxyl transferase subunit beta (294 aa).

A CoA carboxyltransferase N-terminal domain is found at 27-294 (LWHKCPSCDA…PSPVALPVTA (268 aa)). Cysteine 31, cysteine 34, cysteine 50, and cysteine 53 together coordinate Zn(2+). A C4-type zinc finger spans residues 31 to 53 (CPSCDAVLYRPELEKTLDVCPKC).

Belongs to the AccD/PCCB family. Acetyl-CoA carboxylase is a heterohexamer composed of biotin carboxyl carrier protein (AccB), biotin carboxylase (AccC) and two subunits each of ACCase subunit alpha (AccA) and ACCase subunit beta (AccD). Zn(2+) is required as a cofactor.

The protein localises to the cytoplasm. The enzyme catalyses N(6)-carboxybiotinyl-L-lysyl-[protein] + acetyl-CoA = N(6)-biotinyl-L-lysyl-[protein] + malonyl-CoA. The protein operates within lipid metabolism; malonyl-CoA biosynthesis; malonyl-CoA from acetyl-CoA: step 1/1. Its function is as follows. Component of the acetyl coenzyme A carboxylase (ACC) complex. Biotin carboxylase (BC) catalyzes the carboxylation of biotin on its carrier protein (BCCP) and then the CO(2) group is transferred by the transcarboxylase to acetyl-CoA to form malonyl-CoA. This is Acetyl-coenzyme A carboxylase carboxyl transferase subunit beta from Ectopseudomonas mendocina (strain ymp) (Pseudomonas mendocina).